The chain runs to 151 residues: Putative phosphatidylglycerol/phosphatidylinositol transfer protein 3 (151 aa).

A signal peptide spans 1–26; it reads MKYSQNQIVYVIFFFIILIVVKPIES.

Belongs to the NPC2 family. In terms of assembly, monomer.

Functionally, catalyzes the intermembrane transfer of phosphatidylglycerol and phosphatidylinositol. This is Putative phosphatidylglycerol/phosphatidylinositol transfer protein 3 from Dictyostelium discoideum (Social amoeba).